The primary structure comprises 280 residues: UDP-2,3-diacylglucosamine pyrophosphatase LpxI (280 aa).

Substrate is bound by residues alanine 12, 74 to 75, glutamine 169, 187 to 188, lysine 214, and 226 to 233; these read NV, TD, and LPTIGVAT.

This sequence belongs to the LpxI family. Homodimer. Mg(2+) serves as cofactor.

It localises to the cell inner membrane. It catalyses the reaction UDP-2-N,3-O-bis[(3R)-3-hydroxytetradecanoyl]-alpha-D-glucosamine + H2O = 2-N,3-O-bis[(3R)-3-hydroxytetradecanoyl]-alpha-D-glucosaminyl 1-phosphate + UMP + 2 H(+). Its pathway is glycolipid biosynthesis; lipid IV(A) biosynthesis; lipid IV(A) from (3R)-3-hydroxytetradecanoyl-[acyl-carrier-protein] and UDP-N-acetyl-alpha-D-glucosamine: step 4/6. Inhibited by high concentrations of Cu(2+) and Zn(2+). Completely inhibited by EDTA in vitro. Hydrolyzes the pyrophosphate bond of UDP-2,3-diacylglucosamine to form 2,3-diacylglucosamine 1-phosphate (lipid X) and UMP by catalyzing the attack of water at the beta-P atom. Involved in the biosynthesis of lipid A, a phosphorylated glycolipid that anchors the lipopolysaccharide to the outer membrane of the cell. Can functionally complement lpxH deficiency in E.coli. Cannot use CDP-diacylglycerol as substrate. The protein is UDP-2,3-diacylglucosamine pyrophosphatase LpxI of Caulobacter vibrioides (strain ATCC 19089 / CIP 103742 / CB 15) (Caulobacter crescentus).